Here is a 534-residue protein sequence, read N- to C-terminus: Serine/threonine-protein kinase 35 (534 aa).

The segment at 32–176 is disordered; the sequence is VESHGSLGAQ…AAAARAMDPV (145 aa). Low complexity-rich tracts occupy residues 39–65 and 166–176; these read GAQA…TSRA and PAAAARAMDPV. A Protein kinase domain is found at 202–530; the sequence is YSLLAEIGRG…FELETRMDQV (329 aa). ATP contacts are provided by residues 208-216 and Lys-231; that span reads IGRGSYGVV. Asp-360 acts as the Proton acceptor in catalysis.

Belongs to the protein kinase superfamily. Ser/Thr protein kinase family. Interacts with PDLIM1/CLP-36. Post-translationally, autophosphorylated. As to expression, expressed in testis.

It localises to the nucleus. Its subcellular location is the nucleolus. The protein localises to the cytoplasm. It catalyses the reaction L-seryl-[protein] + ATP = O-phospho-L-seryl-[protein] + ADP + H(+). It carries out the reaction L-threonyl-[protein] + ATP = O-phospho-L-threonyl-[protein] + ADP + H(+). The protein is Serine/threonine-protein kinase 35 (STK35) of Homo sapiens (Human).